We begin with the raw amino-acid sequence, 135 residues long: Small ribosomal subunit protein uS9 (135 aa).

It belongs to the universal ribosomal protein uS9 family.

This chain is Small ribosomal subunit protein uS9 (rps9), found in Archaeoglobus fulgidus (strain ATCC 49558 / DSM 4304 / JCM 9628 / NBRC 100126 / VC-16).